Consider the following 924-residue polypeptide: Isoleucine--tRNA ligase (924 aa).

Residues 58–68 (PYANGQIHVGH) carry the 'HIGH' region motif. E561 serves as a coordination point for L-isoleucyl-5'-AMP. A 'KMSKS' region motif is present at residues 602–606 (KMSKS). K605 serves as a coordination point for ATP. Residues C887, C890, C907, and C910 each contribute to the Zn(2+) site.

This sequence belongs to the class-I aminoacyl-tRNA synthetase family. IleS type 1 subfamily. Monomer. The cofactor is Zn(2+).

The protein resides in the cytoplasm. The enzyme catalyses tRNA(Ile) + L-isoleucine + ATP = L-isoleucyl-tRNA(Ile) + AMP + diphosphate. Functionally, catalyzes the attachment of isoleucine to tRNA(Ile). As IleRS can inadvertently accommodate and process structurally similar amino acids such as valine, to avoid such errors it has two additional distinct tRNA(Ile)-dependent editing activities. One activity is designated as 'pretransfer' editing and involves the hydrolysis of activated Val-AMP. The other activity is designated 'posttransfer' editing and involves deacylation of mischarged Val-tRNA(Ile). This is Isoleucine--tRNA ligase from Dichelobacter nodosus (strain VCS1703A).